A 248-amino-acid chain; its full sequence is Malonyl-[acyl-carrier protein] O-methyltransferase 2 (248 aa).

Belongs to the methyltransferase superfamily.

The enzyme catalyses malonyl-[ACP] + S-adenosyl-L-methionine = malonyl-[ACP] methyl ester + S-adenosyl-L-homocysteine. The protein operates within cofactor biosynthesis; biotin biosynthesis. Its function is as follows. Converts the free carboxyl group of a malonyl-thioester to its methyl ester by transfer of a methyl group from S-adenosyl-L-methionine (SAM). It allows to synthesize pimeloyl-ACP via the fatty acid synthetic pathway. The chain is Malonyl-[acyl-carrier protein] O-methyltransferase 2 from Coxiella burnetii (strain RSA 493 / Nine Mile phase I).